A 165-amino-acid chain; its full sequence is MEPSADTHSKPVDIYRDTWVRFLGYANEVGEAFRALVPVGAVWASYGVATTYVTADAIDKGRKAAAAHGERPGKAVCVCVAVVDTFVWQALASVAVPGFTINRVCAASHFLLSRTTRWPLPVRKWTTTAIGLSTIPFIITPIDRSVDLLLDSSLRKLYSEGEKED.

Helical transmembrane passes span 35–55 (ALVP…YVTA), 76–96 (VCVC…SVAV), and 130–150 (IGLS…DLLL).

This sequence belongs to the MTFP1 family.

It localises to the mitochondrion inner membrane. Involved in the mitochondrial division probably by regulating membrane fission. Loss-of-function leads to apoptosis. In Danio rerio (Zebrafish), this protein is Mitochondrial fission process protein 1 (mtfp1).